Consider the following 84-residue polypeptide: Large ribosomal subunit protein bL28 (84 aa).

This sequence belongs to the bacterial ribosomal protein bL28 family.

The chain is Large ribosomal subunit protein bL28 from Deinococcus geothermalis (strain DSM 11300 / CIP 105573 / AG-3a).